We begin with the raw amino-acid sequence, 288 residues long: Proteasome assembly chaperone 1 (288 aa).

Ala2 is modified (N-acetylalanine). Positions 12–38 are disordered; sequence TPCRAGTEEEEEEEDGNRETPEDREVR. Position 18 is a phosphothreonine (Thr18). The segment covering 28–38 has biased composition (basic and acidic residues); it reads NRETPEDREVR. Thr54 is modified (phosphothreonine). The residue at position 180 (Ser180) is a Phosphoserine. N6-acetyllysine is present on Lys264.

The protein belongs to the PSMG1 family. Forms a heterodimer with PSMG2. The PSMG1-PSMG2 heterodimer interacts directly with the PSMA5 and PSMA7 proteasome alpha subunits. Post-translationally, degraded by the proteasome upon completion of 20S proteasome maturation.

It localises to the cytoplasm. The protein resides in the endoplasmic reticulum. Chaperone protein which promotes assembly of the 20S proteasome as part of a heterodimer with PSMG2. The PSMG1-PSMG2 heterodimer binds to the PSMA5 and PSMA7 proteasome subunits, promotes assembly of the proteasome alpha subunits into the heteroheptameric alpha ring and prevents alpha ring dimerization. The sequence is that of Proteasome assembly chaperone 1 from Bos taurus (Bovine).